The chain runs to 418 residues: Synaptotagmin-15 (418 aa).

Over methionine 1–glutamine 4 the chain is Extracellular. The helical; Signal-anchor for type III membrane protein transmembrane segment at leucine 5 to tryptophan 27 threads the bilayer. The Cytoplasmic portion of the chain corresponds to arginine 28–proline 418. C2 domains follow at residues cysteine 144–isoleucine 261 and glutamate 275–glycine 396.

The protein belongs to the synaptotagmin family. As to quaternary structure, homodimer. As to expression, isoform 1 and isoform 2 are expressed in heart, lung, skeletal muscle and testis; not detected in brain, liver and kidney. Isoform 1 is expressed in spleen.

The protein resides in the membrane. May be involved in the trafficking and exocytosis of secretory vesicles in non-neuronal tissues. The sequence is that of Synaptotagmin-15 (Syt15) from Mus musculus (Mouse).